We begin with the raw amino-acid sequence, 215 residues long: Protein-L-isoaspartate O-methyltransferase (215 aa).

Ser62 is a catalytic residue.

Belongs to the methyltransferase superfamily. L-isoaspartyl/D-aspartyl protein methyltransferase family.

It localises to the cytoplasm. The enzyme catalyses [protein]-L-isoaspartate + S-adenosyl-L-methionine = [protein]-L-isoaspartate alpha-methyl ester + S-adenosyl-L-homocysteine. Its function is as follows. Catalyzes the methyl esterification of L-isoaspartyl residues in peptides and proteins that result from spontaneous decomposition of normal L-aspartyl and L-asparaginyl residues. It plays a role in the repair and/or degradation of damaged proteins. The polypeptide is Protein-L-isoaspartate O-methyltransferase (Nitratidesulfovibrio vulgaris (strain DSM 19637 / Miyazaki F) (Desulfovibrio vulgaris)).